Consider the following 371-residue polypeptide: Leu/Ile/Val-binding protein homolog 1 (371 aa).

An N-terminal signal peptide occupies residues 1-23; sequence MRKTLFSGVALAAVIAFGGSAWA.

Belongs to the leucine-binding protein family.

Functionally, component of an amino-acid transport system. The polypeptide is Leu/Ile/Val-binding protein homolog 1 (Brucella suis biovar 1 (strain 1330)).